A 100-amino-acid polypeptide reads, in one-letter code: Cell division topological specificity factor (100 aa).

It belongs to the MinE family.

Its function is as follows. Prevents the cell division inhibition by proteins MinC and MinD at internal division sites while permitting inhibition at polar sites. This ensures cell division at the proper site by restricting the formation of a division septum at the midpoint of the long axis of the cell. The protein is Cell division topological specificity factor of Blochmanniella floridana.